The primary structure comprises 251 residues: Imidazole glycerol phosphate synthase subunit HisF (251 aa).

Catalysis depends on residues Asp-11 and Asp-130.

It belongs to the HisA/HisF family. As to quaternary structure, heterodimer of HisH and HisF.

It is found in the cytoplasm. It catalyses the reaction 5-[(5-phospho-1-deoxy-D-ribulos-1-ylimino)methylamino]-1-(5-phospho-beta-D-ribosyl)imidazole-4-carboxamide + L-glutamine = D-erythro-1-(imidazol-4-yl)glycerol 3-phosphate + 5-amino-1-(5-phospho-beta-D-ribosyl)imidazole-4-carboxamide + L-glutamate + H(+). The protein operates within amino-acid biosynthesis; L-histidine biosynthesis; L-histidine from 5-phospho-alpha-D-ribose 1-diphosphate: step 5/9. In terms of biological role, IGPS catalyzes the conversion of PRFAR and glutamine to IGP, AICAR and glutamate. The HisF subunit catalyzes the cyclization activity that produces IGP and AICAR from PRFAR using the ammonia provided by the HisH subunit. This chain is Imidazole glycerol phosphate synthase subunit HisF, found in Listeria monocytogenes serotype 4b (strain CLIP80459).